A 273-amino-acid polypeptide reads, in one-letter code: Type II iodothyronine deiodinase (273 aa).

Topologically, residues Met1–Leu9 are lumenal. Residues Ile10–Leu34 form a helical; Signal-anchor for type III membrane protein membrane-spanning segment. At Lys35–Gly273 the chain is on the cytoplasmic side. Residue Sec133 is part of the active site. 2 non-standard amino acids (selenocysteine) are found at residues Sec133 and Sec266.

The protein belongs to the iodothyronine deiodinase family. Predominantly monomer. Can form homodimers but homodimerization is not essential for enzyme activity. Interacts with USP20 and USP33. Interacts with MARCHF6. In terms of processing, ubiquitinated by MARCHF6, leading to its degradation by the proteasome. Deubiquitinated by USP20 and USP33. Isoform 1 is expressed in the lung, trachea, kidney, heart, skeletal muscle, placenta, fetal brain and several regions of the adult brain. Isoform 2 is expressed in the brain, heart, kidney and trachea.

Its subcellular location is the endoplasmic reticulum membrane. It catalyses the reaction 3,3',5-triiodo-L-thyronine + iodide + A + H(+) = L-thyroxine + AH2. The catalysed reaction is 3,3'-diiodo-L-thyronine + iodide + A + H(+) = 3,3',5'-triiodo-L-thyronine + AH2. The enzyme catalyses 3'-iodo-L-thyronine + iodide + A + H(+) = 3',5'-diiodo-L-thyronine + AH2. It carries out the reaction 3,3'-diiodothyronamine + iodide + A + H(+) = 3,3',5'-triiodothyronamine + AH2. It catalyses the reaction 3'-iodothyronamine + iodide + A + H(+) = 3',5'-diiodothyronamine + AH2. In terms of biological role, plays a crucial role in the metabolism of thyroid hormones (TH) and has specific roles in TH activation and inactivation by deiodination. Catalyzes the deiodination of L-thyroxine (T4) to 3,5,3'-triiodothyronine (T3), 3,3',5'-triiodothyronine (rT3) to 3,3'-diiodothyronine (3,3'-T2) and 3',5'-diiodothyronine (3',5'-T2) to 3'-monoiodothyronine (3'-T1) via outer-ring deiodination (ORD). Catalyzes the phenolic ring deiodinations of 3,3',5'-triiodothyronamine and 3',5'- diiodothyronamine. In Homo sapiens (Human), this protein is Type II iodothyronine deiodinase (DIO2).